The chain runs to 664 residues: Prelamin-A/C (664 aa).

Residue M1 is modified to N-acetylmethionine. Residues 1 to 25 form a disordered region; the sequence is METPSQRRATRSGAQASSTPLSPTR. The head stretch occupies residues 1–33; sequence METPSQRRATRSGAQASSTPLSPTRITRLQEKE. Residues 1 to 130 form an interaction with MLIP region; it reads METPSQRRAT…TKKEGDLIAA (130 aa). T3 is subject to Phosphothreonine. S5 bears the Phosphoserine mark. T10 carries the post-translational modification Phosphothreonine. 2 positions are modified to phosphoserine: S12 and S18. At T19 the chain carries Phosphothreonine. Phosphoserine; by CDK1 is present on S22. The region spanning 31-387 is the IF rod domain; the sequence is EKEDLQELND…KLLEGEEERL (357 aa). An N6-acetyllysine; alternate modification is found at K32. Position 32 is an N6-succinyllysine; alternate (K32). K32 is covalently cross-linked (Glycyl lysine isopeptide (Lys-Gly) (interchain with G-Cter in SUMO2); alternate). Residues 34-70 form a coil 1A region; sequence DLQELNDRLAVYIDRVRSLETENAGLRLRITESEEVV. Phosphoserine is present on residues S51, S66, and S71. The segment at 71–80 is linker 1; the sequence is SREVSGIKAA. N6-acetyllysine occurs at positions 78 and 97. Residues 81-218 are coil 1B; it reads YEAELGDARK…NIYSEELRET (138 aa). K97 is covalently cross-linked (Glycyl lysine isopeptide (Lys-Gly) (interchain with G-Cter in SUMO2)). The residue at position 107 (S107) is a Phosphoserine. K108, K114, K123, K135, K144, and K155 each carry N6-acetyllysine. Position 171 is an N6-acetyllysine; alternate (K171). An N6-succinyllysine; alternate modification is found at K171. A Glycyl lysine isopeptide (Lys-Gly) (interchain with G-Cter in SUMO2); alternate cross-link involves residue K171. An N6-acetyllysine mark is found at K180, K201, and K208. Residue K201 forms a Glycyl lysine isopeptide (Lys-Gly) (interchain with G-Cter in SUMO2); alternate linkage. K201 participates in a covalent cross-link: Glycyl lysine isopeptide (Lys-Gly) (interchain with G-Cter in SUMO); alternate. Residue K208 forms a Glycyl lysine isopeptide (Lys-Gly) (interchain with G-Cter in SUMO2) linkage. S212 carries the post-translational modification Phosphoserine. Residues K219 and K233 each participate in a glycyl lysine isopeptide (Lys-Gly) (interchain with G-Cter in SUMO2) cross-link. The interval 219-242 is linker 2; it reads KRRHETRLVEIDNGKQREFESRLA. N6-acetyllysine is present on residues K233, K260, K265, and K270. Positions 243 to 383 are coil 2; it reads DALQELRAQH…HAYRKLLEGE (141 aa). The segment at 259–331 is necessary and sufficient for the interaction with IFFO1; that stretch reads YKKELEKTYS…DLEDSLARER (73 aa). Residue K260 forms a Glycyl lysine isopeptide (Lys-Gly) (interchain with G-Cter in SUMO2); alternate linkage. A Glycyl lysine isopeptide (Lys-Gly) (interchain with G-Cter in SUMO2); alternate cross-link involves residue K270. S277 is modified (phosphoserine). At S282 the chain carries Phosphoserine; by ATR. Residues S301 and S307 each carry the phosphoserine modification. K311 participates in a covalent cross-link: Glycyl lysine isopeptide (Lys-Gly) (interchain with G-Cter in SUMO2); alternate. K311, K316, and K341 each carry N6-acetyllysine. Residues K366 and K378 each participate in a glycyl lysine isopeptide (Lys-Gly) (interchain with G-Cter in SUMO2) cross-link. Residues 384 to 442 form a disordered region; the sequence is EERLRLSPSPTSQRSRGRASSHSSQTQGGGSVTKKRKLESTESRSSFSQHARTSGRVAV. Positions 384–664 are tail; sequence EERLRLSPSP…TQSPQNCSIM (281 aa). Phosphoserine is present on S390. Position 392 is a phosphoserine; by CDK1 (S392). S395 carries the phosphoserine; by ATR modification. 6 positions are modified to phosphoserine: S398, S403, S404, S406, S407, and S414. T416 bears the Phosphothreonine mark. K417 carries the N6-acetyllysine modification. Residues K417 and K420 each participate in a glycyl lysine isopeptide (Lys-Gly) (interchain with G-Cter in SUMO2) cross-link. The Nuclear localization signal signature appears at 417–422; the sequence is KKRKLE. Phosphoserine occurs at positions 423, 426, 429, and 431. The segment covering 426–435 has biased composition (polar residues); that stretch reads SRSSFSQHAR. The region spanning 428 to 545 is the LTD domain; the sequence is SSFSQHARTS…EEVAMRKLVR (118 aa). Residue K450 forms a Glycyl lysine isopeptide (Lys-Gly) (interchain with G-Cter in SUMO2); alternate linkage. N6-acetyllysine occurs at positions 450 and 457. Residues S458 and S463 each carry the phosphoserine modification. Residues K470 and K486 each participate in a glycyl lysine isopeptide (Lys-Gly) (interchain with G-Cter in SUMO2) cross-link. K486 carries the post-translational modification N6-acetyllysine. Phosphothreonine is present on residues T496, T505, and T510. 2 positions are modified to phosphoserine: S533 and S546. Phosphothreonine is present on T548. The disordered stretch occupies residues 552–576; that stretch reads DDEDEDGDDLLHHHHGSHCSSSGDP. Residues S568 and S571 each carry the phosphoserine modification. A Glycyl lysine isopeptide (Lys-Gly) (interchain with G-Cter in SUMO2); alternate cross-link involves residue K597. Residue K597 forms a Glycyl lysine isopeptide (Lys-Gly) (interchain with G-Cter in SUMO1); alternate linkage. Residues 598–619 form a disordered region; that stretch reads ASASGSGAQVGGPISSGSSASS. Residues S612, S613, S616, and S619 each carry the phosphoserine modification. Residues S625 and S628 are each glycosylated (O-linked (GlcNAc) serine). A phosphoserine mark is found at S628, S632, S636, and S652. A propeptide spans 647–661 (removed in Lamin-A/C form); the sequence is LLGNSSPRTQSPQNC. At C661 the chain carries Cysteine methyl ester. The S-farnesyl cysteine moiety is linked to residue C661. Positions 662–664 are cleaved as a propeptide — removed in Prelamin-A/C form and in Lamin-A/C form; the sequence is SIM.

This sequence belongs to the intermediate filament family. As to quaternary structure, homodimer of lamin A and lamin C. Lamin dimers then assemble into dimeric head-to-tail polymers. Ultimately, two head-to-tail polymers assemble laterally into a protofilament with a uniformly shaped rod of 3.5 nm in diameter. Interacts with lamin-associated polypeptides IA, IB and TMPO-alpha, RB1 and with emerin. Interacts with SREBF1, SREBF2, SUN2 and TMEM43. Interacts with TMEM201. Proteolytically processed isoform A interacts with NARF. Interacts with SUN1. Interacts with MLIP. Interacts with DMPK; may regulate nuclear envelope stability. Interacts with SUV39H1; the interaction increases stability of SUV39H1. Interacts with SYNE2. Interacts with ITSN1 isoform 2. Interacts with IFFO1; enables the formation of an interior nucleoskeleton that is recruited to DNA double-strand breaks. Interacts with EMD. In terms of assembly, interacts (via C-terminus) with LEMD2 (via N-terminus) (in vitro). In terms of processing, proteolytic cleavage of the C-terminal of 18 residues of prelamin-A/C results in the production of lamin-A/C. The prelamin-A/C maturation pathway includes farnesylation of CAAX motif by protein farnesyltransferase (FNTA and FNTB), removal of the last three amino acids (-AAX) by RCE1/FACE2 and/or ZMPSTE24, methylation of the C-terminal cysteine by ICMT and endoproteolytic removal of the last 15 C-terminal amino acids by ZMPSTE24. Proteolytic cleavage requires prior farnesylation and methylation, and absence of these blocks cleavage. Post-translationally, farnesylation of prelamin-A/C facilitates nuclear envelope targeting. Phosphorylation plays a key role in lamin organization, subcellular localization and nuclear envelope disintegration. Phosphorylation by CDK1 at Ser-22 and Ser-392 at the onset of mitosis drives lamin disassembly and nuclear envelope breakdown. Phosphorylation at Ser-22 and Ser-392 during interphase promotes localization to the nucleoplasm and regulates lamina assembly. Phosphorylation at Ser-22, Ser-392 and Ser-628 during interphase causes redistribution between the nucleus and the cytoplasm. Phosphorylation at Ser-22 by CDK1 regulates matrix stiffness. Phosphorylation status of Ser-22 determines its localization between double-strand break (DSB) sites and the nuclear matrix. Phosphorylated by ATR at Ser-282 in response to DNA damage, leading to lamin disassembly and nuclear envelope rupture. Phosphorylation also regulates stability in micronuclei arising from genome instability: phosphorylation at Ser-395 by ATR in response to genome instability and double-stranded DNA breaks primes LMNA for subsequent phosphorylation at Ser-392 by CDK1 and micronuclei envelope rupture. The rupture of micronuclear envelope triggers the cGAS-STING pathway thereby activating the type I interferon response and innate immunity. In terms of processing, acetylation by KAT8 is required for nuclear architecture. Post-translationally, sumoylation is necessary for the localization to the nuclear envelope. As to expression, in the arteries, prelamin-A/C accumulation is not observed in young healthy vessels but is prevalent in medial vascular smooth muscle cells (VSMCs) from aged individuals and in atherosclerotic lesions, where it often colocalizes with senescent and degenerate VSMCs. Prelamin-A/C expression increases with age and disease. In normal aging, the accumulation of prelamin-A/C is caused in part by the down-regulation of ZMPSTE24/FACE1 in response to oxidative stress.

The protein localises to the nucleus lamina. Its subcellular location is the nucleus envelope. The protein resides in the nucleus. It is found in the nucleoplasm. It localises to the nucleus matrix. The protein localises to the nucleus speckle. Its function is as follows. Lamins are intermediate filament proteins that assemble into a filamentous meshwork, and which constitute the major components of the nuclear lamina, a fibrous layer on the nucleoplasmic side of the inner nuclear membrane. Lamins provide a framework for the nuclear envelope, bridging the nuclear envelope and chromatin, thereby playing an important role in nuclear assembly, chromatin organization, nuclear membrane and telomere dynamics. Lamin A and C also regulate matrix stiffness by conferring nuclear mechanical properties. The structural integrity of the lamina is strictly controlled by the cell cycle, as seen by the disintegration and formation of the nuclear envelope in prophase and telophase, respectively. Lamin A and C are present in equal amounts in the lamina of mammals. Also invoved in DNA repair: recruited by DNA repair proteins XRCC4 and IFFO1 to the DNA double-strand breaks (DSBs) to prevent chromosome translocation by immobilizing broken DNA ends. Required for normal development of peripheral nervous system and skeletal muscle and for muscle satellite cell proliferation. Required for osteoblastogenesis and bone formation. Also prevents fat infiltration of muscle and bone marrow, helping to maintain the volume and strength of skeletal muscle and bone. Required for cardiac homeostasis. Prelamin-A/C can accelerate smooth muscle cell senescence. It acts to disrupt mitosis and induce DNA damage in vascular smooth muscle cells (VSMCs), leading to mitotic failure, genomic instability, and premature senescence. This chain is Prelamin-A/C (LMNA), found in Homo sapiens (Human).